A 215-amino-acid chain; its full sequence is Oligoribonuclease (215 aa).

In terms of domain architecture, Exonuclease spans 5–170 (LVWIDCEMTG…ADIHESIREL (166 aa)). Tyr-127 is a catalytic residue. The tract at residues 196–215 (LGPPGKDAADTDSAAGHTTG) is disordered.

This sequence belongs to the oligoribonuclease family.

It is found in the cytoplasm. In terms of biological role, 3'-to-5' exoribonuclease specific for small oligoribonucleotides. The sequence is that of Oligoribonuclease from Mycobacterium sp. (strain JLS).